Consider the following 352-residue polypeptide: Respiratory nitrate reductase subunit beta (352 aa).

Residues 20–48 (VAMVMDLNKCIGCQTCTVACKSLWTEGGG) form the 4Fe-4S ferredoxin-type 1 domain. Residues Cys-29, Cys-32, Cys-35, and Cys-39 each contribute to the [4Fe-4S] cluster site. Disordered regions lie at residues 63-95 (KGYP…KEDY) and 111-131 (SDRP…DEDQ). The span at 78–95 (SSEHKERKPGQIPDKEDY) shows a compositional bias: basic and acidic residues. 4Fe-4S ferredoxin-type domains follow at residues 139–170 (SYYF…KREE) and 172–201 (GIVL…YNAT). [4Fe-4S] cluster is bound by residues Cys-148, Cys-151, and Cys-156. [3Fe-4S] cluster is bound by residues Cys-160, Cys-181, and Cys-187. 5 residues coordinate [4Fe-4S] cluster: Cys-191, Cys-208, Cys-211, Cys-229, and Cys-233.

Probable multiprotein complex; a catalytic heterodimer of an alpha and beta chain is proposed to associate with additional subunits involved in membrane attachment and electron transfer. The cofactor is [4Fe-4S] cluster. [3Fe-4S] cluster serves as cofactor.

The protein resides in the cell membrane. The catalysed reaction is nitrate + a quinol = a quinone + nitrite + H2O. Inhibited by cyanide, azide and antimycin A. Enzyme stability is not dependent on salt concentration. Its function is as follows. The respiratory membrane-bound nitrate reductase enzyme complex plays a role in generation of metabolic energy by using nitrate as a terminal electron acceptor during anaerobic conditions. The beta chain is an electron transfer unit containing four cysteine clusters involved in the formation of iron-sulfur centers. This chain is Respiratory nitrate reductase subunit beta (narH), found in Haloferax mediterranei (strain ATCC 33500 / DSM 1411 / JCM 8866 / NBRC 14739 / NCIMB 2177 / R-4) (Halobacterium mediterranei).